A 156-amino-acid chain; its full sequence is Lipoprotein signal peptidase (156 aa).

The next 4 helical transmembrane spans lie at 8–28 (IYIN…KWIL), 39–59 (VFFI…SILS), 67–87 (YFLL…MIKF), and 99–119 (SLIL…GFVI). Residues aspartate 120 and aspartate 138 contribute to the active site. The chain crosses the membrane as a helical span at residues 129-149 (WHFATFNIADFSIFIGMIMII).

It belongs to the peptidase A8 family.

It is found in the cell inner membrane. It catalyses the reaction Release of signal peptides from bacterial membrane prolipoproteins. Hydrolyzes -Xaa-Yaa-Zaa-|-(S,diacylglyceryl)Cys-, in which Xaa is hydrophobic (preferably Leu), and Yaa (Ala or Ser) and Zaa (Gly or Ala) have small, neutral side chains.. The protein operates within protein modification; lipoprotein biosynthesis (signal peptide cleavage). Functionally, this protein specifically catalyzes the removal of signal peptides from prolipoproteins. The sequence is that of Lipoprotein signal peptidase from Buchnera aphidicola subsp. Schizaphis graminum (strain Sg).